Consider the following 200-residue polypeptide: MCNSFRIGVLGLQGAISEHVNRLKELEQQPVVVKKSTDLHQLDGLIIPGGESTAIWKLIEENKLYEPIQNFANEGKAIFGTCAGLVLLSKTTIGRDYTPTLKLMDITVQRNGFGRQKDSFEATIQAKYMDDSYHAVFIRAPYIESVGEGVEVIASYNDKIVAARQKNVLVCAFHPELTDDDRFLEMFLTMISSNKNFNHV.

L-glutamine is bound at residue 50 to 52 (GES). C82 serves as the catalytic Nucleophile. Residues R110 and 138-139 (IR) each bind L-glutamine. Active-site charge relay system residues include H174 and E176.

This sequence belongs to the glutaminase PdxT/SNO family. In terms of assembly, in the presence of PdxS, forms a dodecamer of heterodimers. Only shows activity in the heterodimer.

It catalyses the reaction aldehydo-D-ribose 5-phosphate + D-glyceraldehyde 3-phosphate + L-glutamine = pyridoxal 5'-phosphate + L-glutamate + phosphate + 3 H2O + H(+). The catalysed reaction is L-glutamine + H2O = L-glutamate + NH4(+). It functions in the pathway cofactor biosynthesis; pyridoxal 5'-phosphate biosynthesis. Its function is as follows. Catalyzes the hydrolysis of glutamine to glutamate and ammonia as part of the biosynthesis of pyridoxal 5'-phosphate. The resulting ammonia molecule is channeled to the active site of PdxS. The polypeptide is Pyridoxal 5'-phosphate synthase subunit PdxT (Oceanobacillus iheyensis (strain DSM 14371 / CIP 107618 / JCM 11309 / KCTC 3954 / HTE831)).